The following is a 407-amino-acid chain: Melanoma-associated antigen B6 (407 aa).

The disordered stretch occupies residues 1–175 (MPRGHKSKLR…YDVAAEGEDE (175 aa)). 4 stretches are compositionally biased toward polar residues: residues 18 to 29 (TNGQPQGLTGPQ), 57 to 71 (DASIPQESQGVSPTG), 94 to 113 (PSTSRDASVPQESQGASPTG), and 136 to 155 (PSTSHDVSVPQESQGASPTG). In terms of domain architecture, MAGE spans 195 to 394 (VKKKACTLAQ…GLYPHLYEDA (200 aa)).

As to expression, expressed in testis. Not expressed in other normal tissues, but is expressed in tumors of different histological origins.

The sequence is that of Melanoma-associated antigen B6 (MAGEB6) from Homo sapiens (Human).